The sequence spans 463 residues: UDP-N-acetylmuramoylalanine--D-glutamate ligase (463 aa).

Residue 109–115 (GTDGKST) participates in ATP binding.

Belongs to the MurCDEF family.

It is found in the cytoplasm. It catalyses the reaction UDP-N-acetyl-alpha-D-muramoyl-L-alanine + D-glutamate + ATP = UDP-N-acetyl-alpha-D-muramoyl-L-alanyl-D-glutamate + ADP + phosphate + H(+). It participates in cell wall biogenesis; peptidoglycan biosynthesis. In terms of biological role, cell wall formation. Catalyzes the addition of glutamate to the nucleotide precursor UDP-N-acetylmuramoyl-L-alanine (UMA). The protein is UDP-N-acetylmuramoylalanine--D-glutamate ligase of Leptospira interrogans serogroup Icterohaemorrhagiae serovar copenhageni (strain Fiocruz L1-130).